Reading from the N-terminus, the 224-residue chain is MGRGKIEIKRIENATNRQVTYSKRRTGIMKKARELTVLCDAQVAIIMFSSTGKYHEFCSPSTDIKGIFDRYQQAIGTSLWIEQYENMQRTLSHLKDINRNLRTEIRQRMGEDLDGLEFDELRGLEQNVDAALKEVRHRKYHVITTQTETYKKKVKHSYEAYETLQQELGLREEPAFGFVDNTGGGWDGGAGAGAAADMFAFRVVPSQPNLHGMAYGGNHDLRLG.

Positions 1 to 61 (MGRGKIEIKR…GKYHEFCSPS (61 aa)) constitute an MADS-box domain. In terms of domain architecture, K-box spans 84 to 174 (YENMQRTLSH…QQELGLREEP (91 aa)).

As to quaternary structure, may interact with the K-box of MADS4, MADS6 and MADS8. May form a heterodimer with MADS4. Expressed in lodicules, stamens and carpels.

Its subcellular location is the nucleus. In terms of biological role, probable transcription factor involved in the development of floral organs. Required for normal development of lodicules and stamens (whorls 2 and 3). May function as a heterodimer with MADS4. The chain is MADS-box transcription factor 16 (MADS16) from Oryza sativa subsp. japonica (Rice).